The primary structure comprises 182 residues: NADH-quinone oxidoreductase subunit B 2 (182 aa).

4 residues coordinate [4Fe-4S] cluster: C47, C48, C113, and C142.

It belongs to the complex I 20 kDa subunit family. As to quaternary structure, NDH-1 is composed of 14 different subunits. Subunits NuoB, C, D, E, F, and G constitute the peripheral sector of the complex. [4Fe-4S] cluster is required as a cofactor.

It localises to the cell inner membrane. It catalyses the reaction a quinone + NADH + 5 H(+)(in) = a quinol + NAD(+) + 4 H(+)(out). Functionally, NDH-1 shuttles electrons from NADH, via FMN and iron-sulfur (Fe-S) centers, to quinones in the respiratory chain. The immediate electron acceptor for the enzyme in this species is believed to be ubiquinone. Couples the redox reaction to proton translocation (for every two electrons transferred, four hydrogen ions are translocated across the cytoplasmic membrane), and thus conserves the redox energy in a proton gradient. The sequence is that of NADH-quinone oxidoreductase subunit B 2 from Anaeromyxobacter sp. (strain K).